Reading from the N-terminus, the 200-residue chain is 5'(3')-deoxyribonucleotidase, cytosolic type (200 aa).

Asp12 serves as the catalytic Nucleophile. Asp12 and Asp14 together coordinate Mg(2+). Asp14 acts as the Proton donor in catalysis. Phe20, Phe46, Tyr67, and Thr101 together coordinate substrate. Thr102 is modified (phosphothreonine). Position 136 (Lys136) interacts with substrate. Asp147 is a binding site for Mg(2+). Position 184 is a phosphoserine (Ser184).

The protein belongs to the 5'(3')-deoxyribonucleotidase family. Homodimer. Requires Mg(2+) as cofactor.

The protein resides in the cytoplasm. Its function is as follows. Dephosphorylates the 5' and 2'(3')-phosphates of deoxyribonucleotides, with a preference for dUMP and dTMP, intermediate activity towards dGMP, and low activity towards dCMP and dAMP. The chain is 5'(3')-deoxyribonucleotidase, cytosolic type (Nt5c) from Mus musculus (Mouse).